Here is a 54-residue protein sequence, read N- to C-terminus: Anti-adapter protein SpxO (54 aa).

Interacts with SpxH.

Inhibitor of Spx proteolytic control. Acts by interacting with SpxH/YjbH, which disrupts interaction between SpxH and Spx, and inhibits SpxH-enhanced proteolysis of Spx by ClpXP. Required for the stabilization of Spx and activation of Spx-regulated genes in response to cell wall stress. This is Anti-adapter protein SpxO from Bacillus subtilis (strain 168).